A 244-amino-acid chain; its full sequence is Ribonuclease P protein component 3 (244 aa).

Belongs to the eukaryotic/archaeal RNase P protein component 3 family. In terms of assembly, consists of a catalytic RNA component and at least 4-5 protein subunits.

The protein resides in the cytoplasm. The enzyme catalyses Endonucleolytic cleavage of RNA, removing 5'-extranucleotides from tRNA precursor.. Part of ribonuclease P, a protein complex that generates mature tRNA molecules by cleaving their 5'-ends. The protein is Ribonuclease P protein component 3 of Methanopyrus kandleri (strain AV19 / DSM 6324 / JCM 9639 / NBRC 100938).